We begin with the raw amino-acid sequence, 708 residues long: Ubiquitin thioesterase ZRANB1 (708 aa).

The segment at 3–33 adopts a RanBP2-type 1 zinc-finger fold; the sequence is ERGIKWACEYCTYENWPSAIKCTMCRAQRPS. Residues Cys10, Cys13, Cys24, and Cys27 each contribute to the Zn(2+) site. A disordered region spans residues 38 to 73; the sequence is TEDPFKSGSSDVGRDWDPSSTEGGSSPLICPDSSAR. RanBP2-type zinc fingers lie at residues 84 to 113 and 149 to 178; these read NANKWSCHMCTYLNWPRAIRCTQCLSQRRT and RTQHWTCSICTYENWAKAKKCVVCDHPRPN. Residues Cys90, Cys93, Cys104, Cys107, Cys155, Cys158, Cys169, and Cys172 each coordinate Zn(2+). A disordered region spans residues 200–223; sequence RARWRGSCSSGNSQRRSPPTMKRD. The segment covering 206 to 216 has biased composition (polar residues); it reads SCSSGNSQRRS. ANK repeat units lie at residues 260–290 and 313–340; these read KKTDWLFLNACVGVVEGDLAAIEAYKSSGGD and YTLVHLAIRFQRQDMLAILLTEVSQQAA. An OTU domain is found at 432 to 592; it reads LYALWNRTAG…RGHFSALVAM (161 aa). Residue Cys443 is the Nucleophile of the active site. The active-site Proton acceptor is His585.

It belongs to the peptidase C64 family. Interacts with TRAF6. Interacts with APC.

The protein localises to the cytoplasm. It is found in the nucleus. The enzyme catalyses Thiol-dependent hydrolysis of ester, thioester, amide, peptide and isopeptide bonds formed by the C-terminal Gly of ubiquitin (a 76-residue protein attached to proteins as an intracellular targeting signal).. Functionally, ubiquitin thioesterase, which specifically hydrolyzes 'Lys-29'-linked and 'Lys-33'-linked diubiquitin. Also cleaves 'Lys-63'-linked chains, but with 40-fold less efficiency compared to 'Lys-29'-linked ones. Positive regulator of the Wnt signaling pathway that deubiquitinates APC protein, a negative regulator of Wnt-mediated transcription. Acts as a regulator of autophagy by mediating deubiquitination of PIK3C3/VPS34, thereby promoting autophagosome maturation. Plays a role in the regulation of cell morphology and cytoskeletal organization. Required in the stress fiber dynamics and cell migration. This is Ubiquitin thioesterase ZRANB1 from Bos taurus (Bovine).